The chain runs to 60 residues: Sec-independent protein translocase protein TatA (60 aa).

Residues 1–21 (MAGLGVTELLIILAIVIVLFG) traverse the membrane as a helical segment.

Belongs to the TatA/E family. In terms of assembly, forms a complex with TatC.

The protein resides in the cell membrane. Part of the twin-arginine translocation (Tat) system that transports large folded proteins containing a characteristic twin-arginine motif in their signal peptide across membranes. TatA could form the protein-conducting channel of the Tat system. This is Sec-independent protein translocase protein TatA from Herpetosiphon aurantiacus (strain ATCC 23779 / DSM 785 / 114-95).